The sequence spans 433 residues: ATP-dependent protease ATPase subunit HslU (433 aa).

Residues Val18, 60–65 (GVGKTE), Asp246, Glu311, and Arg383 contribute to the ATP site.

It belongs to the ClpX chaperone family. HslU subfamily. As to quaternary structure, a double ring-shaped homohexamer of HslV is capped on each side by a ring-shaped HslU homohexamer. The assembly of the HslU/HslV complex is dependent on binding of ATP.

The protein resides in the cytoplasm. Its function is as follows. ATPase subunit of a proteasome-like degradation complex; this subunit has chaperone activity. The binding of ATP and its subsequent hydrolysis by HslU are essential for unfolding of protein substrates subsequently hydrolyzed by HslV. HslU recognizes the N-terminal part of its protein substrates and unfolds these before they are guided to HslV for hydrolysis. This Nitrobacter winogradskyi (strain ATCC 25391 / DSM 10237 / CIP 104748 / NCIMB 11846 / Nb-255) protein is ATP-dependent protease ATPase subunit HslU.